Here is a 404-residue protein sequence, read N- to C-terminus: Serine/threonine transporter SstT (404 aa).

Helical transmembrane passes span 17–37 (IGIG…VTAI), 44–64 (FVGA…VQAI), 75–95 (ITLI…VAVI), 138–158 (ALAT…GLAL), 179–199 (IVVW…FSTV), 212–232 (LLIL…NPLL), 287–307 (IPLG…VLTL), 319–339 (FLTA…ASGV), and 354–374 (FGIS…VGVI).

It belongs to the dicarboxylate/amino acid:cation symporter (DAACS) (TC 2.A.23) family.

Its subcellular location is the cell membrane. It carries out the reaction L-serine(in) + Na(+)(in) = L-serine(out) + Na(+)(out). The catalysed reaction is L-threonine(in) + Na(+)(in) = L-threonine(out) + Na(+)(out). In terms of biological role, involved in the import of serine and threonine into the cell, with the concomitant import of sodium (symport system). The polypeptide is Serine/threonine transporter SstT (Streptococcus equi subsp. zooepidemicus (strain MGCS10565)).